The sequence spans 397 residues: DNA-binding protein (397 aa).

Zn(2+) is bound by residues Cys-116 and His-118. The segment at 129-161 is flexible loop; sequence IEMAATSESGVAALKEGRGAVEINRWGRQVVKI. Residues Cys-169, Cys-185, Cys-225, Cys-227, Cys-276, and Cys-289 each coordinate Zn(2+). The interval 335–397 is C-terminal arm, DBP binding; that stretch reads ALLPEGSVNE…IVLESSEEDE (63 aa). The tract at residues 338–397 is disordered; sequence PEGSVNEDENPFGLDNSEDEEEVVPPSPPSPARKRTRTTVAEVHHKKKKKIVLESSEEDE. Positions 342–360 are enriched in acidic residues; sequence VNEDENPFGLDNSEDEEEV.

Belongs to the adenoviridae E2A DNA-binding protein family. Homomultimerizes on viral ssDNA bound to pTP. Forms a initiation complex with viral polymerase, pTP and hosts NFIA and POU2F1/OCT1. Interacts with host SRCAP.

It localises to the host nucleus. Functionally, plays a role in the elongation phase of viral strand displacement replication by unwinding the template in an ATP-independent fashion, employing its capacity to form multimers. Also enhances the rate of initiation. Released from template upon second strand synthesis. Assembles in complex with viral pTP, viral pol, host NFIA and host POU2F1/OCT1 on viral origin of replication. Covers the whole ssDNA genome during synthesis. The complementary strand synthesis induces its relese from DNA template. May inhibit cellular transcription mediated by the interaction between host SRCAP and CBP. This is DNA-binding protein from Snake adenovirus serotype 1 (SnAdV-1).